We begin with the raw amino-acid sequence, 152 residues long: Large ribosomal subunit protein bL9 (152 aa).

Belongs to the bacterial ribosomal protein bL9 family.

Its function is as follows. Binds to the 23S rRNA. This chain is Large ribosomal subunit protein bL9, found in Synechococcus sp. (strain CC9605).